The chain runs to 1244 residues: Mitotic chromosome and X-chromosome-associated protein mix-1 (1244 aa).

Position 32-39 (32-39 (GYNGSGKS)) interacts with ATP. Positions 247-355 (VKKSAKEIED…AKRKEHEDSK (109 aa)) form a coiled coil. Residues 337-355 (LSKDREVLDAKRKEHEDSK) are compositionally biased toward basic and acidic residues. The tract at residues 337-369 (LSKDREVLDAKRKEHEDSKAANSKDIQSQSDDE) is disordered. The segment covering 356–365 (AANSKDIQSQ) has biased composition (polar residues). Positions 415-472 (ITAAKKRGERLHNQIKHLEGEKATLSARSKSDIGSADNYQKEVDEINKQLQLLGFNID) form a coiled coil. Residues 526 to 654 (DVFGYVAHLI…DSLDVAREIA (129 aa)) form the SMC hinge domain. 2 coiled-coil regions span residues 701–946 (PQIE…RKEA) and 975–1037 (YTVS…IATL). Positions 919–932 (AKTKSKREEKEKEL) are enriched in basic and acidic residues. The tract at residues 919–943 (AKTKSKREEKEKELTSLQQSEASNR) is disordered. Over residues 1216-1232 (DAAAKKGAQKNDKEPPK) the composition is skewed to basic and acidic residues. The tract at residues 1216 to 1244 (DAAAKKGAQKNDKEPPKKKPIVVDDDDFE) is disordered.

It belongs to the SMC family. SMC2 subfamily. As to quaternary structure, component of the condensin I complex, which contains the mix-1/SMC2 and smc-4/SMC4 heterodimer, and three non SMC subunits that probably regulate the complex: dpy-26, capg-1 and dpy-28. Within the complex, interacts with smc-4, dpy-26, dpy-28 and capg-1. Interaction with smc-4 is required for mitotic chromosome localization. Component of the condensin II complex, which contains the mix-1/SMC2 and smc-4/SMC4 heterodimer, and three non SMC subunits, capg-2, kle-2 and hcp-6 that probably regulate the complex. Within the complex, interacts with smc-4, capg-2, kle-2 and hcp-6. Also a component of the condensin-like dosage compensation complex, which contains the mix-1/SMC2 and dpy-27/SMC4 heterodimer, and three non SMC subunits that probably regulate the complex: dpy-26, capg-1 and dpy-28. Within the complex, interacts with dpy-27, dpy-26, capg-1 and dpy-28. Requires capg-1 for hermaphrodite X chromosome localization. Interacts with smcl-1. In terms of tissue distribution, expressed in embryos and in adult somatic and germline tissues (at protein level).

The protein resides in the nucleus. Its subcellular location is the chromosome. In terms of biological role, essential protein required for both chromosome condensation and segregation and X-chromosome dosage compensation depending on its binding partners. Central component of the condensin I complex, a complex required for conversion of interphase chromatin into mitotic-like condense chromosomes. The condensin complex introduces positive supercoils into relaxed DNA in the presence of type I topoisomerases. Converts nicked DNA into positive knotted forms in the presence of type II topoisomerases. Central component of the condensin II complex, a complex that seems to play a role in prophase chromosome condensation and organization. Both the condensin complex I and II play a role in meiotic and mitotic chromosome segregation. Plays a role in robust cytokinesis upon the presence of chromatin obstructions. Also a member of the condensin I-like dosage compensation complex that associates specifically with hermaphrodite X chromosomes to reduce their gene transcription during interphase. The protein is Mitotic chromosome and X-chromosome-associated protein mix-1 (mix-1) of Caenorhabditis elegans.